Consider the following 391-residue polypeptide: UPF0229 protein CLH_2838 (391 aa).

2 disordered regions span residues 1–23 (MAIF…DKRR) and 75–107 (VATG…GNEE). Residues 80-92 (GEEKRGDKIESGS) show a composition bias toward basic and acidic residues.

The protein belongs to the UPF0229 family.

This is UPF0229 protein CLH_2838 from Clostridium botulinum (strain Alaska E43 / Type E3).